The primary structure comprises 121 residues: Phosphoribosyl-AMP cyclohydrolase (121 aa).

Residue aspartate 76 coordinates Mg(2+). Cysteine 77 contacts Zn(2+). 2 residues coordinate Mg(2+): aspartate 78 and aspartate 80. The Zn(2+) site is built by cysteine 93 and cysteine 100.

Belongs to the PRA-CH family. In terms of assembly, homodimer. It depends on Mg(2+) as a cofactor. Zn(2+) serves as cofactor.

The protein resides in the cytoplasm. The catalysed reaction is 1-(5-phospho-beta-D-ribosyl)-5'-AMP + H2O = 1-(5-phospho-beta-D-ribosyl)-5-[(5-phospho-beta-D-ribosylamino)methylideneamino]imidazole-4-carboxamide. Its pathway is amino-acid biosynthesis; L-histidine biosynthesis; L-histidine from 5-phospho-alpha-D-ribose 1-diphosphate: step 3/9. Functionally, catalyzes the hydrolysis of the adenine ring of phosphoribosyl-AMP. This Paracoccus denitrificans (strain Pd 1222) protein is Phosphoribosyl-AMP cyclohydrolase.